An 87-amino-acid chain; its full sequence is Selenoprotein W (87 aa).

Positions 10 to 13 (CGAU) form a cross-link, cysteinyl-selenocysteine (Cys-Sec); redox-active. A non-standard amino acid (selenocysteine) is located at residue Sec13. Cys37 is subject to S-glutathionyl cysteine.

It belongs to the SelWTH family. Selenoprotein W subfamily. Interacts with DPYSL2, PRDX1, YWHAB, YWHAG, HSP70 and HSP90. As to expression, detected in muscle, heart, tongue, brain, lung, spleen, kidney and liver. Highest levels expressed in muscle and heart whereas lowest levels detected in liver (at protein level).

It is found in the cytoplasm. Plays a role as a glutathione (GSH)-dependent antioxidant. May be involved in a redox-related process. May play a role in the myopathies of selenium deficiency. This chain is Selenoprotein W, found in Ovis aries (Sheep).